The following is a 354-amino-acid chain: tRNA N6-adenosine threonylcarbamoyltransferase (354 aa).

The Fe cation site is built by H111 and H115. Substrate-binding positions include 134–138, D167, G180, and N279; that span reads LVSGG. D319 contributes to the Fe cation binding site.

Belongs to the KAE1 / TsaD family. Fe(2+) serves as cofactor.

It is found in the cytoplasm. The catalysed reaction is L-threonylcarbamoyladenylate + adenosine(37) in tRNA = N(6)-L-threonylcarbamoyladenosine(37) in tRNA + AMP + H(+). Required for the formation of a threonylcarbamoyl group on adenosine at position 37 (t(6)A37) in tRNAs that read codons beginning with adenine. Is involved in the transfer of the threonylcarbamoyl moiety of threonylcarbamoyl-AMP (TC-AMP) to the N6 group of A37, together with TsaE and TsaB. TsaD likely plays a direct catalytic role in this reaction. The chain is tRNA N6-adenosine threonylcarbamoyltransferase from Neisseria gonorrhoeae (strain ATCC 700825 / FA 1090).